The following is a 418-amino-acid chain: Transmembrane protease serine 11A (418 aa).

Residues 1–18 (MMYRTVGFGTRSRNLKPW) are Cytoplasmic-facing. A helical; Signal-anchor for type II membrane protein membrane pass occupies residues 19-39 (MIAVLIVLSLTVVAVTIGLLV). Over 40–418 (HFLVFDQKKE…RNWIASKTGI (379 aa)) the chain is Extracellular. Positions 47 to 164 (KKEYYHGSFK…SSVQVNAMSS (118 aa)) constitute an SEA domain. The N-linked (GlcNAc...) asparagine glycan is linked to asparagine 153. Positions 187–417 (IASGVIAPKA…YRNWIASKTG (231 aa)) constitute a Peptidase S1 domain. Cysteines 212 and 228 form a disulfide. Catalysis depends on charge relay system residues histidine 227 and aspartate 272. N-linked (GlcNAc...) asparagine glycosylation occurs at asparagine 303. 2 cysteine pairs are disulfide-bonded: cysteine 337-cysteine 353 and cysteine 364-cysteine 393. Catalysis depends on serine 368, which acts as the Charge relay system.

It belongs to the peptidase S1 family. May interact with ZBTB17. As to expression, expressed in esophagus, liver, colon and lung. Down-regulated in esophagus cancers.

The protein resides in the membrane. Probable serine protease which may play a role in cellular senescence. Overexpression inhibits cell growth and induce G1 cell cycle arrest. In Homo sapiens (Human), this protein is Transmembrane protease serine 11A (TMPRSS11A).